A 281-amino-acid chain; its full sequence is 2,3,4,5-tetrahydropyridine-2,6-dicarboxylate N-succinyltransferase (281 aa).

Residues arginine 108 and aspartate 145 each contribute to the substrate site.

Belongs to the transferase hexapeptide repeat family. Homotrimer.

It localises to the cytoplasm. It carries out the reaction (S)-2,3,4,5-tetrahydrodipicolinate + succinyl-CoA + H2O = (S)-2-succinylamino-6-oxoheptanedioate + CoA. Its pathway is amino-acid biosynthesis; L-lysine biosynthesis via DAP pathway; LL-2,6-diaminopimelate from (S)-tetrahydrodipicolinate (succinylase route): step 1/3. In Rhodopseudomonas palustris (strain BisB5), this protein is 2,3,4,5-tetrahydropyridine-2,6-dicarboxylate N-succinyltransferase.